We begin with the raw amino-acid sequence, 426 residues long: Histidine--tRNA ligase (426 aa).

Belongs to the class-II aminoacyl-tRNA synthetase family. As to quaternary structure, homodimer.

It is found in the cytoplasm. It catalyses the reaction tRNA(His) + L-histidine + ATP = L-histidyl-tRNA(His) + AMP + diphosphate + H(+). The protein is Histidine--tRNA ligase of Streptococcus pyogenes serotype M6 (strain ATCC BAA-946 / MGAS10394).